A 954-amino-acid polypeptide reads, in one-letter code: Glycine dehydrogenase (decarboxylating) (954 aa).

K704 bears the N6-(pyridoxal phosphate)lysine mark.

This sequence belongs to the GcvP family. As to quaternary structure, the glycine cleavage system is composed of four proteins: P, T, L and H. Requires pyridoxal 5'-phosphate as cofactor.

It carries out the reaction N(6)-[(R)-lipoyl]-L-lysyl-[glycine-cleavage complex H protein] + glycine + H(+) = N(6)-[(R)-S(8)-aminomethyldihydrolipoyl]-L-lysyl-[glycine-cleavage complex H protein] + CO2. Functionally, the glycine cleavage system catalyzes the degradation of glycine. The P protein binds the alpha-amino group of glycine through its pyridoxal phosphate cofactor; CO(2) is released and the remaining methylamine moiety is then transferred to the lipoamide cofactor of the H protein. The protein is Glycine dehydrogenase (decarboxylating) of Vibrio cholerae serotype O1 (strain ATCC 39541 / Classical Ogawa 395 / O395).